A 720-amino-acid chain; its full sequence is Protein unc-112 (720 aa).

Disordered stretches follow at residues 145–170 (DLRR…ESVG) and 210–236 (MGTL…TMRR). Residues 288-614 (WLDSSRSLME…ALPEHGIHYF (327 aa)) enclose the FERM domain. One can recognise a PH domain in the interval 402–507 (VPELADYLKY…WMAACRLASR (106 aa)).

It belongs to the kindlin family. Interacts with pat-4/ILK. Probably forms a complex with pat-4 and pat-6. Component of an integrin containing attachment complex, composed of at least pat-2, pat-3, pat-4, pat-6, unc-52, unc-97 and unc-112. As to expression, mainly expressed in muscle cells in both embryos and adults.

The protein resides in the cell membrane. The protein localises to the cytoplasm. Its subcellular location is the myofibril. It is found in the sarcomere. It localises to the m line. Its function is as follows. Component of an integrin containing attachment complex, which is required for muscle development and maintenance. Probable regulator of cell-extracellular matrix adhesion. Required during initial muscle assembly to form dense bodies and M-lines. The chain is Protein unc-112 from Caenorhabditis elegans.